The following is a 219-amino-acid chain: Histone H1.4 (219 aa).

Residues 1-15 show a composition bias toward low complexity; that stretch reads MSETAPAAPAAPAPA. The segment at 1–41 is disordered; that stretch reads MSETAPAAPAAPAPAEKTPIKKKARKAAGGAKRKASGPPVS. Serine 2 carries the N-acetylserine modification. Residue serine 2 is modified to Phosphoserine. Lysine 17 bears the N6-acetyllysine mark. Threonine 18 is modified (phosphothreonine). Residues 20–35 show a composition bias toward basic residues; it reads IKKKARKAAGGAKRKA. The residue at position 26 (lysine 26) is an N6-acetyllysine; alternate. An N6-methyllysine; alternate modification is found at lysine 26. At lysine 34 the chain carries N6-(beta-hydroxybutyryl)lysine; alternate. Lysine 34 carries the post-translational modification N6-succinyllysine; alternate. Serine 36 carries the post-translational modification Phosphoserine. Positions 36–109 constitute an H15 domain; it reads SGPPVSELIT…GASGSFKLNK (74 aa). Position 52 is an N6-(beta-hydroxybutyryl)lysine (lysine 52). Arginine 54 bears the Citrulline mark. N6-(beta-hydroxybutyryl)lysine occurs at positions 64, 85, 90, and 106. The segment at 92 to 219 is disordered; that stretch reads TLVQTKGTGA…KPKKTAAKKK (128 aa). Basic residues predominate over residues 119–140; the sequence is KAKKAGAAKAKKPAGAAKKPKK. Phosphothreonine is present on threonine 146. Composition is skewed to basic residues over residues 149-160 and 168-185; these read KSTKKTPKKAKK and KKAK…KKAP. An ADP-ribosylserine modification is found at serine 150. Serine 187 carries the phosphoserine modification. The segment covering 192–219 has biased composition (basic residues); sequence RAVKPKAAKPKTSKPKAAKPKKTAAKKK.

Belongs to the histone H1/H5 family. H1 histones are progressively phosphorylated during the cell cycle, becoming maximally phosphorylated during late G2 phase and M phase, and being dephosphorylated sharply thereafter. In terms of processing, acetylated at Lys-26. Deacetylated at Lys-26 by SIRT1. Post-translationally, citrullination at Arg-54 (H1R54ci) by PADI4 takes place within the DNA-binding site of H1 and results in its displacement from chromatin and global chromatin decondensation, thereby promoting pluripotency and stem cell maintenance. ADP-ribosylated on Ser-150 in response to DNA damage.

The protein localises to the nucleus. It localises to the chromosome. Functionally, histone H1 protein binds to linker DNA between nucleosomes forming the macromolecular structure known as the chromatin fiber. Histones H1 are necessary for the condensation of nucleosome chains into higher-order structured fibers. Also acts as a regulator of individual gene transcription through chromatin remodeling, nucleosome spacing and DNA methylation. The sequence is that of Histone H1.4 from Rattus norvegicus (Rat).